Reading from the N-terminus, the 446-residue chain is D(1A) dopamine receptor (446 aa).

The Extracellular segment spans residues 1-22 (MAPNTSTMDEAGLPAERDFSFR). N-linked (GlcNAc...) asparagine glycosylation is present at N4. Residues 23-48 (ILTACFLSLLILSTLLGNTLVCAAVI) traverse the membrane as a helical segment. At 49 to 59 (RFRHLRSKVTN) the chain is on the cytoplasmic side. Residues 60 to 86 (FFVISLAVSDLLVAVLVMPWKAVAEIA) traverse the membrane as a helical segment. The Extracellular portion of the chain corresponds to 87-95 (GFWPLGPFC). C95 and C186 are joined by a disulfide. The helical transmembrane segment at 96–118 (NIWVAFDIMCSTASILNLCVISV) threads the bilayer. The Cytoplasmic portion of the chain corresponds to 119–137 (DRYWAISSPFQYERKMTPK). Residues 138 to 162 (AAFILISVAWTLSVLISFIPVQLSW) form a helical membrane-spanning segment. Over 163–192 (HKAKPTWPLDGNFTSLEDTEDDNCDTRLSR) the chain is Extracellular. A helical membrane pass occupies residues 193 to 218 (TYAISSSLISFYIPVAIMIVTYTSIY). At 219 to 272 (RIAQKQIRRISALERAAVHAKNCQTTAGNGNPVECAQSESSFKMSFKRETKVLK) the chain is on the cytoplasmic side. A helical transmembrane segment spans residues 273 to 299 (TLSVIMGVFVCCWLPFFISNCMVPFCG). Residues 300–312 (SEETQPFCIDSIT) are Extracellular-facing. Residues 313 to 337 (FDVFVWFGWANSSLNPIIYAFNADF) form a helical membrane-spanning segment. The Cytoplasmic portion of the chain corresponds to 338–446 (QKAFSTLLGC…PVTHSGQHST (109 aa)). Residues C347 and C351 are each lipidated (S-palmitoyl cysteine).

This sequence belongs to the G-protein coupled receptor 1 family. As to quaternary structure, interacts with DNAJC14 via its C-terminus PubMed:11331877. Interacts with DRD2. Interacts with DORIP1. In terms of processing, N-glycosylated. In terms of tissue distribution, brain, in the striatum, the nucleus accumbens, and the olfactory tubercle.

The protein localises to the cell membrane. It localises to the endoplasmic reticulum membrane. Its subcellular location is the cell projection. It is found in the dendrite. The protein resides in the cilium membrane. The protein localises to the dendritic spine. Its function is as follows. Dopamine receptor whose activity is mediated by G proteins which activate adenylyl cyclase. This chain is D(1A) dopamine receptor (Drd1), found in Rattus norvegicus (Rat).